A 234-amino-acid chain; its full sequence is MAALLFYISAIFVPEAIWLLWSFPHWETMHVWNSLSEIPTAYVTAFISGDALLAVIGFWVAAKLIRSGRDYAAHIQWIAGYFAFFFVLAHGWDGTGWQRFTWDPTVTGMPWEPGRTMWVDFATSNVAITLYAMALPTIVPMIAGGYIWLRNGHILAGLDGARASSLAVKGVAIYLLGVFVAFLMAACATVISLHLTTQAGMLVGVIVTITVAYALAFRRGGILQTAISRGFNLT.

6 consecutive transmembrane segments (helical) span residues 5–23 (LFYISAIFVPEAIWLLWSF), 38–60 (IPTAYVTAFISGDALLAVIGFWV), 73–92 (AHIQWIAGYFAFFFVLAHGW), 127–149 (AITLYAMALPTIVPMIAGGYIWL), 170–192 (GVAIYLLGVFVAFLMAACATVIS), and 197–217 (TQAGMLVGVIVTITVAYALAF).

The protein resides in the cell membrane. This is an uncharacterized protein from Archaeoglobus fulgidus (strain ATCC 49558 / DSM 4304 / JCM 9628 / NBRC 100126 / VC-16).